The sequence spans 318 residues: MRKVAIIGSGNIGTDLMIKVLRVSDLLEVAAMVGIDPDSDGLARARRLKVQTTHEGVEGLLALDEFDEIDIVFDATSAGAHIKNAETLRKFGKYLVDLTPAAIGPFVVPAVNLTDQLNRNVDNVNMVTCGGQATIPIVAAVSQVTPVAYAEIVASISSKSAGPGTRANIDEFTETTAQAIESVGGAARGKAIIILNPADPPVIMRDTVLCLTGDVDQDAVRDSVSTMVEEVSRYVPGYHLKQEVQFDRVSAADVRTLLPAGVGTVSTQISVFLEVEGAAHYLPAYAGNLDIMTSAALRVGEGIAERLNHAEAPRRSRA.

9–12 is an NAD(+) binding site; it reads SGNI. The Acyl-thioester intermediate role is filled by Cys129. NAD(+)-binding positions include 160–168 and Asn288; that span reads SAGPGTRAN.

It belongs to the acetaldehyde dehydrogenase family.

It catalyses the reaction acetaldehyde + NAD(+) + CoA = acetyl-CoA + NADH + H(+). The chain is Acetaldehyde dehydrogenase 2 from Mycolicibacterium vanbaalenii (strain DSM 7251 / JCM 13017 / BCRC 16820 / KCTC 9966 / NRRL B-24157 / PYR-1) (Mycobacterium vanbaalenii).